A 26-amino-acid chain; its full sequence is MSDIEQRIKQAVAEQLGMRAEEIKNE.

In terms of domain architecture, Carrier spans 2–26; sequence SDIEQRIKQAVAEQLGMRAEEIKNE.

The protein belongs to the acyl carrier protein (ACP) family. Post-translationally, 4'-phosphopantetheine is transferred from CoA to a specific serine of apo-ACP by AcpS. This modification is essential for activity because fatty acids are bound in thioester linkage to the sulfhydryl of the prosthetic group.

It is found in the cytoplasm. The protein operates within lipid metabolism; fatty acid biosynthesis. Its function is as follows. Carrier of the growing fatty acid chain in fatty acid biosynthesis. This Acinetobacter calcoaceticus protein is Acyl carrier protein (acpP).